Consider the following 421-residue polypeptide: Odorant receptor 67b (421 aa).

Residues 1 to 48 are Cytoplasmic-facing; that stretch reads MQDQLDHELERIDKLPKLGLLWVEYSAYALGVNIAPRKRSSKYCRLTR. A helical transmembrane segment spans residues 49–69; it reads ILVLIVNLSIIYSLVAFIMEN. Over 70 to 71 the chain is Extracellular; it reads YM. The chain crosses the membrane as a helical span at residues 72–92; it reads ISFETYVEAVLLTFQLSVGVV. Over 93-151 the chain is Cytoplasmic; that stretch reads KMFHFQNKVESCSQLVFSTETGEVLKSLGLFQLDLPRKKELLSSVSLILLNNWMIIDRQ. A helical membrane pass occupies residues 152–172; sequence VMFFFKIVCMPVLYYCVRPYF. Residues 173-217 lie on the Extracellular side of the membrane; it reads QYIFDCYIKDKDTCEMTLTYPAIVPYLQLGNYEFPSYVIRFFLLQ. Residues 218–238 form a helical membrane-spanning segment; it reads SGPLWCFFAVFGFNSLFVVLT. Over 239–289 the chain is Cytoplasmic; it reads RYESGLIKVLRFLVQNSTSDILVPKDQRVKYLQCCVRLFARISSHHNQIEN. The chain crosses the membrane as a helical span at residues 290 to 310; sequence LFKYIILVQCSVSSILICMLL. Over 311 to 315 the chain is Extracellular; it reads YKIST. The helical transmembrane segment at 316–336 threads the bilayer; sequence VLEVGWVWMGMIMVYFVTIAL. Over 337 to 384 the chain is Cytoplasmic; it reads EITLYNVSAQKVESQSELLFHDWYNCSWYNESREFKFMIKMMLLFSRR. Residues 385–405 traverse the membrane as a helical segment; that stretch reads TFVLSVGGFTSLSHKFLVQVF. The Extracellular segment spans residues 406 to 421; that stretch reads RLSANFFLLLRNMNNK.

This sequence belongs to the insect chemoreceptor superfamily. Heteromeric odorant receptor channel (TC 1.A.69) family. Or63a subfamily. In terms of assembly, interacts with Orco. Complexes exist early in the endomembrane system in olfactory sensory neurons (OSNs), coupling these complexes to the conserved ciliary trafficking pathway.

Its subcellular location is the cell membrane. Functionally, odorant receptor which mediates acceptance or avoidance behavior, depending on its substrates. The odorant receptor repertoire encodes a large collection of odor stimuli that vary widely in identity, intensity, and duration. May form a complex with Orco to form odorant-sensing units, providing sensitive and prolonged odorant signaling and calcium permeability. Involved in the behavioral responses to ethyl acetate, pentyl acetate, methyl caproate, anisole, heptanal, 2-heptanone, r-carvone, nonanoic acid, and pyrazines. The polypeptide is Odorant receptor 67b (Or67b) (Drosophila melanogaster (Fruit fly)).